The chain runs to 128 residues: Large ribosomal subunit protein bL12 (128 aa).

Residues 97-128 are disordered; it reads GAPSTLKEGVSKEDAEEAKKQLTEAGATVEVK. Basic and acidic residues predominate over residues 105-118; it reads GVSKEDAEEAKKQL.

The protein belongs to the bacterial ribosomal protein bL12 family. In terms of assembly, homodimer. Part of the ribosomal stalk of the 50S ribosomal subunit. Forms a multimeric L10(L12)X complex, where L10 forms an elongated spine to which 2 to 4 L12 dimers bind in a sequential fashion. Binds GTP-bound translation factors.

Functionally, forms part of the ribosomal stalk which helps the ribosome interact with GTP-bound translation factors. Is thus essential for accurate translation. The protein is Large ribosomal subunit protein bL12 of Lawsonia intracellularis (strain PHE/MN1-00).